The following is a 794-amino-acid chain: Ubiquitin carboxyl-terminal hydrolase 10 (794 aa).

Alanine 2 is modified (N-acetylalanine). Residues 2–99 form an interaction with p53/TP53 region; the sequence is ALHNPQYIFG…ILGCPTSKKT (98 aa). The segment at 6 to 21 is G3BP1-binding; it reads PQYIFGDFSPDEFNQF. Threonine 24 and threonine 99 each carry phosphothreonine. Residues 123-164 form a disordered region; that stretch reads ESSSNAEAETLENDSGAGGLGQRERKKKKKRPPGYYSYLKDG. 3 positions are modified to phosphoserine: serine 209, serine 224, and serine 316. The interval 303-326 is disordered; that stretch reads ESADLDPAKPESQSPPAESALSVS. Over residues 313 to 326 the composition is skewed to polar residues; the sequence is ESQSPPAESALSVS. Serine 332 carries the phosphoserine; by ATM modification. Phosphoserine is present on residues serine 361 and serine 366. The USP domain occupies 411 to 791; it reads RGLINKGNWC…TAYLLYYRRV (381 aa). Catalysis depends on cysteine 420, which acts as the Nucleophile. At serine 543 the chain carries Phosphoserine. Residues 546 to 588 are disordered; the sequence is HEKHSVSNGPGSHLIEDEELEDTGEGSEDEWEQVGPKNKTSVT. A compositionally biased stretch (acidic residues) spans 561-577; that stretch reads EDEELEDTGEGSEDEWE. Threonine 568 bears the Phosphothreonine mark. Position 572 is a phosphoserine (serine 572). Histidine 745 (proton acceptor) is an active-site residue.

Belongs to the peptidase C19 family. USP10 subfamily. In terms of assembly, found in a deubiquitination complex with TANK, USP10 and ZC3H12A; this complex inhibits genotoxic stress- or interleukin-1-beta (IL1B)-mediated NF-kappa-B activation by promoting IKBKG or TRAF6 deubiquitination. Interacts with IKBKG; this interaction increases in response to DNA damage. Interacts with TANK; this interaction increases in response to DNA damage. Interacts with TRAF6; this interaction increases in response to DNA damage. Interacts with ZC3H12A; this interaction increases in response to DNA damage. Interacts with G3BP1 (via NTF2 domain) and G3BP2 (via NTF2 domain); inhibiting stress granule formation. In terms of processing, phosphorylated by ATM following DNA damage, leading to stabilization and translocation it to the nucleus. Ubiquitinated. Deubiquitinated by USP13.

The protein localises to the cytoplasm. It is found in the nucleus. Its subcellular location is the early endosome. The catalysed reaction is Thiol-dependent hydrolysis of ester, thioester, amide, peptide and isopeptide bonds formed by the C-terminal Gly of ubiquitin (a 76-residue protein attached to proteins as an intracellular targeting signal).. With respect to regulation, specifically inhibited by spautin-1 (specific and potent autophagy inhibitor-1), a derivative of MBCQ that binds to USP10 and inhibits deubiquitinase activity. Regulated by PIK3C3/VPS34-containing complexes. Hydrolase that can remove conjugated ubiquitin from target proteins such as p53/TP53, RPS2/us5, RPS3/us3, RPS10/eS10, BECN1, SNX3 and CFTR. Acts as an essential regulator of p53/TP53 stability: in unstressed cells, specifically deubiquitinates p53/TP53 in the cytoplasm, leading to counteract MDM2 action and stabilize p53/TP53. Following DNA damage, translocates to the nucleus and deubiquitinates p53/TP53, leading to regulate the p53/TP53-dependent DNA damage response. Component of a regulatory loop that controls autophagy and p53/TP53 levels: mediates deubiquitination of BECN1, a key regulator of autophagy, leading to stabilize the PIK3C3/VPS34-containing complexes. In turn, PIK3C3/VPS34-containing complexes regulate USP10 stability, suggesting the existence of a regulatory system by which PIK3C3/VPS34-containing complexes regulate p53/TP53 protein levels via USP10 and USP13. Does not deubiquitinate MDM2. Plays a key role in 40S ribosome subunit recycling when a ribosome has stalled during translation: acts both by inhibiting formation of stress granules, which store stalled translation pre-initiation complexes, and mediating deubiquitination of 40S ribosome subunits. Acts as a negative regulator of stress granules formation by lowering G3BP1 and G3BP2 valence, thereby preventing G3BP1 and G3BP2 ability to undergo liquid-liquid phase separation (LLPS) and assembly of stress granules. Promotes 40S ribosome subunit recycling following ribosome dissociation in response to ribosome stalling by mediating deubiquitination of 40S ribosomal proteins RPS2/us5, RPS3/us3 and RPS10/eS10, thereby preventing their degradation by the proteasome. Part of a ribosome quality control that takes place when ribosomes have stalled during translation initiation (iRQC): USP10 acts by removing monoubiquitination of RPS2/us5 and RPS3/us3, promoting 40S ribosomal subunit recycling. Deubiquitinates CFTR in early endosomes, enhancing its endocytic recycling. Involved in a TANK-dependent negative feedback response to attenuate NF-kappa-B activation via deubiquitinating IKBKG or TRAF6 in response to interleukin-1-beta (IL1B) stimulation or upon DNA damage. Deubiquitinates TBX21 leading to its stabilization. Plays a negative role in the RLR signaling pathway upon RNA virus infection by blocking the RIGI-mediated MAVS activation. Mechanistically, removes the unanchored 'Lys-63'-linked polyubiquitin chains of MAVS to inhibit its aggregation, essential for its activation. The chain is Ubiquitin carboxyl-terminal hydrolase 10 (Usp10) from Rattus norvegicus (Rat).